We begin with the raw amino-acid sequence, 456 residues long: tRNA(Ile)-lysidine synthase (456 aa).

An ATP-binding site is contributed by 28-33 (SGGSDS).

The protein belongs to the tRNA(Ile)-lysidine synthase family.

Its subcellular location is the cytoplasm. The catalysed reaction is cytidine(34) in tRNA(Ile2) + L-lysine + ATP = lysidine(34) in tRNA(Ile2) + AMP + diphosphate + H(+). Ligates lysine onto the cytidine present at position 34 of the AUA codon-specific tRNA(Ile) that contains the anticodon CAU, in an ATP-dependent manner. Cytidine is converted to lysidine, thus changing the amino acid specificity of the tRNA from methionine to isoleucine. This chain is tRNA(Ile)-lysidine synthase, found in Brucella anthropi (strain ATCC 49188 / DSM 6882 / CCUG 24695 / JCM 21032 / LMG 3331 / NBRC 15819 / NCTC 12168 / Alc 37) (Ochrobactrum anthropi).